Here is a 548-residue protein sequence, read N- to C-terminus: Tyrosine-protein phosphatase non-receptor type 61F (548 aa).

Topologically, residues 1 to 525 (MSEQKTSGSG…KQLAAKKRRS (525 aa)) are cytoplasmic. The region spanning 33–296 (FYKEICETCD…DFSYQAIIEG (264 aa)) is the Tyrosine-protein phosphatase domain. The segment at 46 to 65 (KEKQFSTSESERHTNRGLNR) is disordered. S83 carries the post-translational modification Phosphoserine. The residue at position 86 (Y86) is a Phosphotyrosine. Residues D203, 237–243 (CSAGIGR), and Q281 each bind substrate. The Phosphocysteine intermediate role is filled by C237. 3 short sequence motifs (PXXP motif (SH3-binding)) span residues 327–330 (PPLP), 339–342 (PLAP), and 394–397 (PPLP). The disordered stretch occupies residues 386 to 517 (EVADSRPLPP…RKQRENEDKQ (132 aa)). Over residues 404-428 (SDSDEDYLLDDDDEDDTDEDEEYET) the composition is skewed to acidic residues. Short sequence motifs (PXXP motif (SH3-binding)) lie at residues 459–462 (PAVP) and 480–483 (PASP). Residues 502 to 517 (KVNDMKRKQRENEDKQ) show a composition bias toward basic and acidic residues. A helical transmembrane segment spans residues 526–545 (LLTYIAAGVVVGVICAYAYT). The Extracellular segment spans residues 546 to 548 (KLG).

This sequence belongs to the protein-tyrosine phosphatase family. Non-receptor class 1 subfamily. Interacts (via C-terminus) with dock/dreadlocks; this interaction is independent of insulin stimulation and is required for dephosphorylation of the insulin-like receptor InR.

The protein localises to the cytoplasm. Its subcellular location is the membrane. The protein resides in the endomembrane system. It localises to the nucleus. It carries out the reaction O-phospho-L-tyrosyl-[protein] + H2O = L-tyrosyl-[protein] + phosphate. In terms of biological role, non-receptor protein tyrosine phosphatase. Required for maintaining dock/dreadlocks in its non-phosphorylated state. Negative regulator of InR/insulin-like receptor signaling through dephosphorylation of tyrosines when recruited by dock/dreadlocks. In Drosophila melanogaster (Fruit fly), this protein is Tyrosine-protein phosphatase non-receptor type 61F.